The chain runs to 809 residues: MPSSISVKLVAAESLYKRDVFRSPDPFAVLTIDGYQTKSTSAAKKTLNPYWNETFKFDDINENSILTIQVFDQKKFKKKDQGFLGVVNVRVGDVLGHLDEDTATSSGRPREETITRDLKKSNDGMAVSGRLIVVLSKLPSSSPHSQAPSGHTASSSTNTSSTTRTNGHSTSSTRNHSTSHPSRGTAQAVESTLQSGTTAATNTATTSHRSTNSTSSATRQYSSFEDQYGRLPPGWERRTDNFGRTYYVDHNTRTTTWKRPTLDQTEAERGNQLNANTELERRQHRGRTLPGGSSDNSSVTVQVGGGSNIPPVNGAAAAAFAATGGTTSGLGELPSGWEQRFTPEGRAYFVDHNTRTTTWVDPRRQQYIRTYGPTNTTIQQQPVSQLGPLPSGWEMRLTNTARVYFVDHNTKTTTWDDPRLPSSLDQNVPQYKRDFRRKVIYFRSQPALRILPGQCHIKVRRKNIFEDAYQEIMRQTPEDLKKRLMIKFDGEEGLDYGGVSREFFFLLSHEMFNPFYCLFEYSAYDNYTIQINPNSGINPEHLNYFKFIGRVVGLGVFHRRFLDAFFVGALYKMMLRKKVVLQDMEGVDAEVYNSLNWMLENSIDGVLDLTFSADDERFGEVVTVDLKPDGRNIEVTDGNKKEYVELYTQWRIVDRVQEQFKAFMDGFNELIPEDLVTVFDERELELLIGGIAEIDIEDWKKHTDYRGYQESDEVIQWFWKCVSEWDNEQRARLLQFTTGTSRIPVNGFKDLQGSDGPRRFTIEKAGEVQQLPKSHTCFNRVDLPQYVDYDSMKQKLTLAVEETIGFGQE.

Residues 1 to 105 (MPSSISVKLV…GHLDEDTATS (105 aa)) form the C2 domain. Disordered stretches follow at residues 99–122 (DEDT…KKSN), 139–240 (PSSS…RRTD), and 257–298 (WKRP…DNSS). Basic and acidic residues predominate over residues 108-122 (RPREETITRDLKKSN). Polar residues predominate over residues 139 to 148 (PSSSPHSQAP). Over residues 149-183 (SGHTASSSTNTSSTTRTNGHSTSSTRNHSTSHPSR) the composition is skewed to low complexity. A compositionally biased stretch (polar residues) spans 184–196 (GTAQAVESTLQSG). Low complexity predominate over residues 197 to 219 (TTAATNTATTSHRSTNSTSSATR). 3 consecutive WW domains span residues 229-262 (GRLP…RPTL), 331-364 (GELP…DPRR), and 387-420 (GPLP…DPRL). Residue lysine 258 forms a Glycyl lysine isopeptide (Lys-Gly) (interchain with G-Cter in ubiquitin) linkage. The region spanning 705-809 (YRGYQESDEV…VEETIGFGQE (105 aa)) is the HECT domain. Catalysis depends on cysteine 777, which acts as the Glycyl thioester intermediate.

The protein belongs to the RSP5/NEDD4 family. Component of the RSP5-BUL1/2 ubiquitin ligase complex composed of at least RSP5 and BUL1 or BUL2. Component of the RSP5-UBA1-UBC5 ubiquitin ligase complex composed of E3 RSP5, E1 UBA1 and E2 UBC5. Also forms a ternary complex with RUP1 and UBP2. Interacts (via WW domains) with LSB1. Interacts (via WW domains) with PIN3/LSB2. Interacts (via WW domains) with RCR1 (via PY motifs). Interacts with UBP2; the interaction is direct. Interacts with HSE1. Interacts with LAS17. Interacts with ROG3. Interacts with ROD1. Interacts with RVS167. Interacts with ubiquitin. The ubiquitination appears to be the result of an intramolecular transfer of ubiquitin.

It localises to the cytoplasm. The protein localises to the nucleus. The protein resides in the cytoskeleton. It is found in the actin patch. The catalysed reaction is S-ubiquitinyl-[E2 ubiquitin-conjugating enzyme]-L-cysteine + [acceptor protein]-L-lysine = [E2 ubiquitin-conjugating enzyme]-L-cysteine + N(6)-ubiquitinyl-[acceptor protein]-L-lysine.. Its pathway is protein modification; protein ubiquitination. E3 ubiquitin-protein ligase which accepts ubiquitin from an E2 ubiquitin-conjugating enzyme in the form of a thioester and then directly transfers the ubiquitin to targeted substrates. Component of a RSP5 ubiquitin ligase complex which specifies polyubiquitination and intracellular trafficking of the general amino acid permease GAP1 as well as other cell surface proteins like GAP1, FUR4, MAL61, PMA1 and STE2. The RSP5-BUL1/2 complex is also necessary for the heat-shock element (HSE)-mediated gene expression, nitrogen starvation GLN3-dependent transcription, pressure-induced differential regulation of the two tryptophan permeases TAT1 and TAT2 and sorting efficiency into multivesicular bodies. The RSP5-UBA1-UBC5 ubiquitin ligase complex ubiquitinates RPO21 forming 'Lys-63'-linked polyubiquitin chains. Plays a role in tolerance to o-dinitrobenzene. Involved in actin cytoskeleton organization and dynamics. Ubiquitinates the LAS17-binding proteins LSB1 and PIN3/LSB2 without directing them for degradation and affects LAS17 levels in a SLA1-dependent and LSB1/2-independent manner. Also involved in the degradation of non-functional 18S rRNAs in response to stalled ribosomes by mediating polyubiquitination of monoubiquitinated RPS3/uS3: mediates formation of 'Lys-63'-linked polyubiquitin chains on monoubiquitined RPS3/uS3, promoting the degradation of non-functional 18S rRNAs. The polypeptide is E3 ubiquitin-protein ligase RSP5 (RSP5) (Saccharomyces cerevisiae (strain ATCC 204508 / S288c) (Baker's yeast)).